The sequence spans 61 residues: Small ribosomal subunit protein uS14 (61 aa).

The Zn(2+) site is built by Cys24, Cys27, Cys40, and Cys43.

The protein belongs to the universal ribosomal protein uS14 family. Zinc-binding uS14 subfamily. As to quaternary structure, part of the 30S ribosomal subunit. Contacts proteins S3 and S10. The cofactor is Zn(2+).

In terms of biological role, binds 16S rRNA, required for the assembly of 30S particles and may also be responsible for determining the conformation of the 16S rRNA at the A site. The sequence is that of Small ribosomal subunit protein uS14 from Mycoplasma mobile (strain ATCC 43663 / 163K / NCTC 11711) (Mesomycoplasma mobile).